The chain runs to 454 residues: 3-phosphoshikimate 1-carboxyvinyltransferase (454 aa).

Positions 39, 40, and 44 each coordinate 3-phosphoshikimate. Phosphoenolpyruvate is bound at residue Lys-39. Phosphoenolpyruvate-binding residues include Gly-112 and Arg-140. Residues Ser-185, Gln-187, Asp-333, and Lys-360 each coordinate 3-phosphoshikimate. Gln-187 lines the phosphoenolpyruvate pocket. Asp-333 (proton acceptor) is an active-site residue. Phosphoenolpyruvate is bound by residues Arg-364 and Arg-405.

It belongs to the EPSP synthase family. In terms of assembly, monomer.

It is found in the cytoplasm. The enzyme catalyses 3-phosphoshikimate + phosphoenolpyruvate = 5-O-(1-carboxyvinyl)-3-phosphoshikimate + phosphate. It functions in the pathway metabolic intermediate biosynthesis; chorismate biosynthesis; chorismate from D-erythrose 4-phosphate and phosphoenolpyruvate: step 6/7. Its function is as follows. Catalyzes the transfer of the enolpyruvyl moiety of phosphoenolpyruvate (PEP) to the 5-hydroxyl of shikimate-3-phosphate (S3P) to produce enolpyruvyl shikimate-3-phosphate and inorganic phosphate. In Xylella fastidiosa (strain Temecula1 / ATCC 700964), this protein is 3-phosphoshikimate 1-carboxyvinyltransferase.